The sequence spans 62 residues: Protein UL148D (62 aa).

A helical membrane pass occupies residues 30–50; that stretch reads WWISVAIVIFIGVCLVALMYF.

The protein resides in the host membrane. The sequence is that of Protein UL148D (UL148D) from Human cytomegalovirus (strain Merlin) (HHV-5).